Consider the following 434-residue polypeptide: Serine/threonine transporter SstT (434 aa).

The next 9 membrane-spanning stretches (helical) occupy residues Ile-14–Ile-34, Phe-41–Ile-61, Phe-72–Ala-92, Ala-135–Leu-155, Thr-172–Leu-192, Leu-210–Val-230, Ile-282–Met-302, Ile-316–Ile-336, and Phe-351–Val-371. The disordered stretch occupies residues Lys-414–Val-434.

The protein belongs to the dicarboxylate/amino acid:cation symporter (DAACS) (TC 2.A.23) family.

Its subcellular location is the cell membrane. It carries out the reaction L-serine(in) + Na(+)(in) = L-serine(out) + Na(+)(out). The enzyme catalyses L-threonine(in) + Na(+)(in) = L-threonine(out) + Na(+)(out). Its function is as follows. Involved in the import of serine and threonine into the cell, with the concomitant import of sodium (symport system). In Lacticaseibacillus paracasei (strain ATCC 334 / BCRC 17002 / CCUG 31169 / CIP 107868 / KCTC 3260 / NRRL B-441) (Lactobacillus paracasei), this protein is Serine/threonine transporter SstT.